The following is a 485-amino-acid chain: 2-succinylbenzoate--CoA ligase (485 aa).

This sequence belongs to the ATP-dependent AMP-binding enzyme family. MenE subfamily.

It carries out the reaction 2-succinylbenzoate + ATP + CoA = 2-succinylbenzoyl-CoA + AMP + diphosphate. Its pathway is quinol/quinone metabolism; 1,4-dihydroxy-2-naphthoate biosynthesis; 1,4-dihydroxy-2-naphthoate from chorismate: step 5/7. The protein operates within quinol/quinone metabolism; menaquinone biosynthesis. Functionally, converts 2-succinylbenzoate (OSB) to 2-succinylbenzoyl-CoA (OSB-CoA). The chain is 2-succinylbenzoate--CoA ligase from Enterococcus faecalis (strain ATCC 700802 / V583).